We begin with the raw amino-acid sequence, 1159 residues long: MEFNTYIGRAGTGKSTAMLNQIKNKMKQDPLGDPIVLIAPTQSTFQLEQAFVNDSELHGSLRTEVLHFERLSHRVFQEVGGLTEQRLSKAALEMMIFHIVQQHESDLKLYGSQAQYYGLSEKLAEQIQDFKKYNVTPEHLNQLIENHSIQTRTKHKLEDISLIYKQLESRMNGEFITTEDSLQQFIEILSQSQWIKKAEVFIDGFHNFSTLEYRIIEALVQHAKQVTVLLTTDGSHHPFSLFRKPSEVLSHLEDIANRLNINLNKTYFNTFYRYNNDDLKNLENGFDALQFTPKHHQNHVKIFESSSMREEINEVARRILKDVREADYKFRDIAILYRDESYAYLFESILPSYDIPFNIDTKKSMTHHPIMEMLRSLLEVIRSNWHINAMLRLFKTNVLTSQFKRSSYLIDLLENFVLERGIYGKRWLDEDIFSIDQFSRMGRKSHQLTEGHQALYKEVIKLKKNVINKVLYFEQAMNEAHTVKDYATSFYESLEYFELPSQLMTQRDELELAGLTEKAEEIDQVWNGLIQILDDLVTVFDDQEMTLQQFLDVFDIGLEQLEFVMIPQTLDQVSIGTMDLAKVDNKKHIYMVGMNDGILPQTVSSSSLITDEEKKYVEDNAHVELSPTSDILQMDEAFVCYIAMTRSQQSVTFSYSLMGNSGDEKEISPFLTQIKELFYDLEITNLQDLHKAQPLLMMQHSHQTKIQLFEYLRGWLDHEDIDYRWLDAYLAIRDDDQLNQGLDYLTTSLTYDNETVQLNEILSQQLYGKTINASVSRFEGYQQCPFKHYASHGLRLNERTKYELQNFDLGDIFHSVLKYISDRIYGDFKNLDTKNIQSLTKEALELILPKVQFNLLNSSAYYKYLSKKIGSIVETTLKALKYQGEYSKFVPQRFETGFRKSPKNKGELVAQPLITNQGIPINIRGQIDRIDTYTKGDHSYVNIIDYKSSESSATLDLTKVYYGLQMQMMTYMDIVLQNKERLGLTDIVKPGGLLYFHVHEPRIKFKSWADIDEDQFQKDYIKNFKMSGLLNRDQEVLDALDIRLEPKYNSDIVPIALTAKGAINQRSSKVADENIIYQLIEHNKKNFIETASHIMDGHTEVAPLKYKQVLPCQFCNYKSVCHVDGLIDSKRYRTVDESIKPLDLIQQLRNEGGERHDSN.

The UvrD-like helicase ATP-binding domain maps to 1–275 (MEFNTYIGRA…TYFNTFYRYN (275 aa)). 8–15 (GRAGTGKS) contacts ATP. The region spanning 269–583 (NTFYRYNNDD…SIGTMDLAKV (315 aa)) is the UvrD-like helicase C-terminal domain. Residues Cys-784, Cys-1112, Cys-1115, and Cys-1121 each coordinate [4Fe-4S] cluster.

It belongs to the helicase family. AddB/RexB type 1 subfamily. As to quaternary structure, heterodimer of AddA and AddB. The cofactor is Mg(2+). It depends on [4Fe-4S] cluster as a cofactor.

Functionally, the heterodimer acts as both an ATP-dependent DNA helicase and an ATP-dependent, dual-direction single-stranded exonuclease. Recognizes the chi site generating a DNA molecule suitable for the initiation of homologous recombination. The AddB subunit has 5' -&gt; 3' nuclease activity but not helicase activity. This chain is ATP-dependent helicase/deoxyribonuclease subunit B, found in Staphylococcus epidermidis (strain ATCC 35984 / DSM 28319 / BCRC 17069 / CCUG 31568 / BM 3577 / RP62A).